An 812-amino-acid polypeptide reads, in one-letter code: Xaa-Pro dipeptidyl-peptidase (812 aa).

Catalysis depends on charge relay system residues S372, D492, and H523.

The protein belongs to the peptidase S15 family. As to quaternary structure, homodimer.

The protein resides in the cytoplasm. It catalyses the reaction Hydrolyzes Xaa-Pro-|- bonds to release unblocked, N-terminal dipeptides from substrates including Ala-Pro-|-p-nitroanilide and (sequentially) Tyr-Pro-|-Phe-Pro-|-Gly-Pro-|-Ile.. Functionally, removes N-terminal dipeptides sequentially from polypeptides having unsubstituted N-termini provided that the penultimate residue is proline. The sequence is that of Xaa-Pro dipeptidyl-peptidase from Pediococcus pentosaceus (strain ATCC 25745 / CCUG 21536 / LMG 10740 / 183-1w).